Here is a 364-residue protein sequence, read N- to C-terminus: Aminomethyltransferase (364 aa).

It belongs to the GcvT family. The glycine cleavage system is composed of four proteins: P, T, L and H.

It catalyses the reaction N(6)-[(R)-S(8)-aminomethyldihydrolipoyl]-L-lysyl-[protein] + (6S)-5,6,7,8-tetrahydrofolate = N(6)-[(R)-dihydrolipoyl]-L-lysyl-[protein] + (6R)-5,10-methylene-5,6,7,8-tetrahydrofolate + NH4(+). The glycine cleavage system catalyzes the degradation of glycine. The chain is Aminomethyltransferase from Staphylococcus carnosus (strain TM300).